A 236-amino-acid polypeptide reads, in one-letter code: 7-cyano-7-deazaguanine synthase (236 aa).

Position 21–31 (21–31 (LSGGLDSATVL)) interacts with ATP. Cysteine 202, cysteine 212, cysteine 215, and cysteine 218 together coordinate Zn(2+).

Belongs to the QueC family. Requires Zn(2+) as cofactor.

The enzyme catalyses 7-carboxy-7-deazaguanine + NH4(+) + ATP = 7-cyano-7-deazaguanine + ADP + phosphate + H2O + H(+). It participates in purine metabolism; 7-cyano-7-deazaguanine biosynthesis. Its function is as follows. Catalyzes the ATP-dependent conversion of 7-carboxy-7-deazaguanine (CDG) to 7-cyano-7-deazaguanine (preQ(0)). In Frankia casuarinae (strain DSM 45818 / CECT 9043 / HFP020203 / CcI3), this protein is 7-cyano-7-deazaguanine synthase.